Reading from the N-terminus, the 118-residue chain is uncharacterized protein (118 aa).

To M.jannaschii MJ0310 and MJ1340.

This is an uncharacterized protein from Methanocaldococcus jannaschii (strain ATCC 43067 / DSM 2661 / JAL-1 / JCM 10045 / NBRC 100440) (Methanococcus jannaschii).